The chain runs to 113 residues: Class I hydrophobin fvh1 (113 aa).

Residues 1 to 20 (MVSFRAFTVAASLFATLAAA) form the signal peptide. 4 disulfide bridges follow: Cys-34-Cys-94, Cys-41-Cys-88, Cys-42-Cys-75, and Cys-95-Cys-108. Asn-35 is a glycosylation site (N-linked (GlcNAc...) asparagine). An N-linked (GlcNAc...) asparagine glycan is attached at Asn-97.

The protein belongs to the fungal hydrophobin family. In terms of assembly, self-assembles to form functional amyloid fibrils called rodlets. Self-assembly into fibrillar rodlets occurs spontaneously at hydrophobic:hydrophilic interfaces and the rodlets further associate laterally to form amphipathic monolayers.

It localises to the secreted. The protein localises to the cell wall. Functionally, aerial growth, conidiation, and dispersal of filamentous fungi in the environment rely upon a capability of their secreting small amphipathic proteins called hydrophobins (HPBs) with low sequence identity. Class I can self-assemble into an outermost layer of rodlet bundles on aerial cell surfaces, conferring cellular hydrophobicity that supports fungal growth, development and dispersal; whereas Class II form highly ordered films at water-air interfaces through intermolecular interactions but contribute nothing to the rodlet structure. Fvh1 is a class I hydrophobin involved in fruiting body initiation. This Flammulina velutipes (Agaricus velutipes) protein is Class I hydrophobin fvh1.